The chain runs to 95 residues: High mobility group nucleosome-binding domain-containing protein 3 (95 aa).

Basic and acidic residues-rich tracts occupy residues 1 to 25 (MPKR…EPTR), 39 to 53 (PEPK…KEPG), and 62 to 72 (GKKEEKQEAGK). Positions 1–95 (MPKRKSPENA…EEVLSTNASH (95 aa)) are disordered. Phosphoserine is present on Ser6. The residue at position 78 (Ser78) is a Phosphoserine.

This sequence belongs to the HMGN family. In terms of assembly, interacts with the ligand binding domain of the thyroid receptor (TR) (in vitro). Requires the presence of thyroid hormone for its interaction. Interacts with transcriptional regulator SEHBP. Interacts with nucleosomes.

It localises to the nucleus. Functionally, binds to nucleosomes, regulating chromatin structure and consequently, chromatin-dependent processes such as transcription, DNA replication and DNA repair. Affects both insulin and glucagon levels and modulates the expression of pancreatic genes involved in insulin secretion. Regulates the expression of the glucose transporter SLC2A2 by binding specifically to its promoter region and recruiting PDX1 and additional transcription factors. Regulates the expression of SLC6A9, a glycine transporter which regulates the glycine concentration in synaptic junctions in the central nervous system, by binding to its transcription start site. May play a role in ocular development and astrocyte function. The protein is High mobility group nucleosome-binding domain-containing protein 3 (Hmgn3) of Rattus norvegicus (Rat).